A 304-amino-acid chain; its full sequence is Heme A synthase (304 aa).

Residues 1–8 are Cytoplasmic-facing; it reads MFNKRNLK. Residues 9 to 29 traverse the membrane as a helical segment; it reads WLSVLATIIMAFVQLGGALVT. Residues 30 to 67 are Extracellular-facing; sequence KTGSEDGCGSSWPLCHGALLPQNLPIDTIIELSHRAVS. Cys-37 and Cys-44 are disulfide-bonded. Glu-60 is an active-site residue. His-63 is a heme o binding site. Residues 68–88 form a helical membrane-spanning segment; it reads GLSLIVVLWLAITAWKHIGYI. Over 89–93 the chain is Cytoplasmic; sequence REVKP. The helical transmembrane segment at 94-114 threads the bilayer; the sequence is LAIISIAFLLVQALIGAAAVI. Topologically, residues 115-123 are extracellular; that stretch reads WQQNSYVLA. The helical transmembrane segment at 124 to 144 threads the bilayer; it reads LHFGISLISFSSVFVLMLIIF. His-125 is a binding site for heme o. The Cytoplasmic segment spans residues 145-163; it reads EVDKKYEADELYIRKPLRR. Residues 164–184 form a helical membrane-spanning segment; that stretch reads LTWIMTGIVYLTIYTGALVRH. The Extracellular portion of the chain corresponds to 185-215; it reads AKASLAYGGWPLPFHDIIPHTEQDWVQFAHR. His-214 contacts heme b. A helical membrane pass occupies residues 216–236; the sequence is GMAFITFFWIMITFIHAVKNY. Over 237-244 the chain is Cytoplasmic; the sequence is SENRTIRY. Residues 245 to 265 form a helical membrane-spanning segment; that stretch reads GYTTAFILIILQVITGALSVM. Over 266–270 the chain is Extracellular; it reads TNVNL. The chain crosses the membrane as a helical span at residues 271 to 291; sequence FIALLHALFITILFGMIAYFI. His-276 contributes to the heme b binding site. The Cytoplasmic segment spans residues 292-304; it reads MLMLRTIRSEKIK.

It belongs to the COX15/CtaA family. Type 1 subfamily. Interacts with CtaB. The cofactor is heme b.

It is found in the cell membrane. The enzyme catalyses Fe(II)-heme o + 2 A + H2O = Fe(II)-heme a + 2 AH2. The protein operates within porphyrin-containing compound metabolism; heme A biosynthesis; heme A from heme O: step 1/1. Functionally, catalyzes the conversion of heme O to heme A by two successive hydroxylations of the methyl group at C8. The first hydroxylation forms heme I, the second hydroxylation results in an unstable dihydroxymethyl group, which spontaneously dehydrates, resulting in the formyl group of heme A. The protein is Heme A synthase of Staphylococcus haemolyticus (strain JCSC1435).